A 105-amino-acid chain; its full sequence is Integration host factor subunit beta (105 aa).

It belongs to the bacterial histone-like protein family. Heterodimer of an alpha and a beta chain.

This protein is one of the two subunits of integration host factor, a specific DNA-binding protein that functions in genetic recombination as well as in transcriptional and translational control. The protein is Integration host factor subunit beta of Nitrosomonas eutropha (strain DSM 101675 / C91 / Nm57).